A 395-amino-acid chain; its full sequence is Immunity-related GTPase family M protein 2 (395 aa).

One can recognise an IRG-type G domain in the interval 63-239 (NKIKIAVTGD…PKLRETLQKD (177 aa)). GTP-binding positions include 72 to 79 (DSGNGMSS), 97 to 101 (TGVVR), and 179 to 181 (KLD).

It belongs to the TRAFAC class dynamin-like GTPase superfamily. IRG family. Post-translationally, ubiquitinated; polyubiquitinated in the cytosol, promoting Gbp1 recruitment to the T.gondii parasitophorous vacuole membranes.

Its subcellular location is the cytoplasmic vesicle membrane. The protein localises to the golgi apparatus membrane. It localises to the cytoplasm. The protein resides in the cytosol. It catalyses the reaction GTP + H2O = GDP + phosphate + H(+). In terms of biological role, immunity-related GTPase that plays important roles in innate immunity and inflammatory response. Acts as a dynamin-like protein that binds to intracellular membranes and promotes remodeling and trafficking of those membranes. Required for clearance of acute protozoan and bacterial infections. Acts by participating to Tgtp1/Irgb6 and Gbp1-mediated parasite killing by promoting their accumulation on the T.gondii parasitophorous vacuole membranes. Also required for prolonged loading of ubiquitin and p62/Sqstm1 to parasitophorous vacuole membranes. Also acts as a key negative regulator of the inflammatory response by inhibiting the non-canonical inflammasome, thereby protecting against Casp11-driven septic shock during endotoxemia. The polypeptide is Immunity-related GTPase family M protein 2 (Mus musculus (Mouse)).